The following is a 294-amino-acid chain: 4-hydroxy-tetrahydrodipicolinate synthase (294 aa).

Threonine 47 contributes to the pyruvate binding site. Tyrosine 136 (proton donor/acceptor) is an active-site residue. Catalysis depends on lysine 164, which acts as the Schiff-base intermediate with substrate. Valine 206 contacts pyruvate.

It belongs to the DapA family. In terms of assembly, homotetramer; dimer of dimers.

It is found in the cytoplasm. The catalysed reaction is L-aspartate 4-semialdehyde + pyruvate = (2S,4S)-4-hydroxy-2,3,4,5-tetrahydrodipicolinate + H2O + H(+). Its pathway is amino-acid biosynthesis; L-lysine biosynthesis via DAP pathway; (S)-tetrahydrodipicolinate from L-aspartate: step 3/4. Catalyzes the condensation of (S)-aspartate-beta-semialdehyde [(S)-ASA] and pyruvate to 4-hydroxy-tetrahydrodipicolinate (HTPA). This Nostoc punctiforme (strain ATCC 29133 / PCC 73102) protein is 4-hydroxy-tetrahydrodipicolinate synthase.